Here is a 70-residue protein sequence, read N- to C-terminus: Small ribosomal subunit protein bS21 (70 aa).

This sequence belongs to the bacterial ribosomal protein bS21 family.

The chain is Small ribosomal subunit protein bS21 from Helicobacter hepaticus (strain ATCC 51449 / 3B1).